Consider the following 295-residue polypeptide: GDP-polyphosphate phosphotransferase (295 aa).

Residues 1–28 (MDIPSVDVSTATNDGASSRAKGHRSAAP) are disordered. The segment covering 7 to 16 (DVSTATNDGA) has biased composition (polar residues). 2 positions are modified to phosphohistidine: His115 and His247.

The protein belongs to the polyphosphate kinase 2 (PPK2) family. Class I subfamily. In terms of assembly, interacts with Ndk. In terms of processing, autophosphorylated at His-115 and His-247 using polyP as a phosphate donor.

It carries out the reaction [phosphate](n) + GTP = [phosphate](n+1) + GDP. Its function is as follows. Uses inorganic polyphosphate (polyP) as a donor to convert GDP to GTP. In addition, modulates nucleotide triphosphate synthesis catalyzed by the nucleoside diphosphate kinase (Ndk) in favor of GTP production over CTP or UTP. Plays an important role in survival of M.tuberculosis in macrophages. The chain is GDP-polyphosphate phosphotransferase from Mycobacterium tuberculosis (strain ATCC 25618 / H37Rv).